The sequence spans 302 residues: Recombination-associated protein RdgC (302 aa).

The protein belongs to the RdgC family.

The protein resides in the cytoplasm. It is found in the nucleoid. In terms of biological role, may be involved in recombination. This Haemophilus influenzae (strain PittGG) protein is Recombination-associated protein RdgC.